The sequence spans 1070 residues: DNA-directed RNA polymerase subunit beta (1070 aa).

The protein belongs to the RNA polymerase beta chain family. In terms of assembly, in plastids the minimal PEP RNA polymerase catalytic core is composed of four subunits: alpha, beta, beta', and beta''. When a (nuclear-encoded) sigma factor is associated with the core the holoenzyme is formed, which can initiate transcription.

It is found in the plastid. The protein localises to the chloroplast. It carries out the reaction RNA(n) + a ribonucleoside 5'-triphosphate = RNA(n+1) + diphosphate. Functionally, DNA-dependent RNA polymerase catalyzes the transcription of DNA into RNA using the four ribonucleoside triphosphates as substrates. In Dioscorea elephantipes (Elephant's foot yam), this protein is DNA-directed RNA polymerase subunit beta.